The following is a 549-amino-acid chain: Glucose-6-phosphate isomerase (549 aa).

The active-site Proton donor is the E355. Catalysis depends on residues H386 and K514.

Belongs to the GPI family.

The protein resides in the cytoplasm. The enzyme catalyses alpha-D-glucose 6-phosphate = beta-D-fructose 6-phosphate. It functions in the pathway carbohydrate biosynthesis; gluconeogenesis. The protein operates within carbohydrate degradation; glycolysis; D-glyceraldehyde 3-phosphate and glycerone phosphate from D-glucose: step 2/4. Functionally, catalyzes the reversible isomerization of glucose-6-phosphate to fructose-6-phosphate. This Pectobacterium carotovorum subsp. carotovorum (strain PC1) protein is Glucose-6-phosphate isomerase.